The primary structure comprises 289 residues: Phosphatidylserine decarboxylase proenzyme (289 aa).

Active-site charge relay system; for autoendoproteolytic cleavage activity residues include Asp92, His149, and Ser254. The Schiff-base intermediate with substrate; via pyruvic acid; for decarboxylase activity role is filled by Ser254. Ser254 carries the pyruvic acid (Ser); by autocatalysis modification.

This sequence belongs to the phosphatidylserine decarboxylase family. PSD-B subfamily. Prokaryotic type I sub-subfamily. As to quaternary structure, heterodimer of a large membrane-associated beta subunit and a small pyruvoyl-containing alpha subunit. Pyruvate serves as cofactor. Post-translationally, is synthesized initially as an inactive proenzyme. Formation of the active enzyme involves a self-maturation process in which the active site pyruvoyl group is generated from an internal serine residue via an autocatalytic post-translational modification. Two non-identical subunits are generated from the proenzyme in this reaction, and the pyruvate is formed at the N-terminus of the alpha chain, which is derived from the carboxyl end of the proenzyme. The autoendoproteolytic cleavage occurs by a canonical serine protease mechanism, in which the side chain hydroxyl group of the serine supplies its oxygen atom to form the C-terminus of the beta chain, while the remainder of the serine residue undergoes an oxidative deamination to produce ammonia and the pyruvoyl prosthetic group on the alpha chain. During this reaction, the Ser that is part of the protease active site of the proenzyme becomes the pyruvoyl prosthetic group, which constitutes an essential element of the active site of the mature decarboxylase.

The protein localises to the cell membrane. The catalysed reaction is a 1,2-diacyl-sn-glycero-3-phospho-L-serine + H(+) = a 1,2-diacyl-sn-glycero-3-phosphoethanolamine + CO2. It functions in the pathway phospholipid metabolism; phosphatidylethanolamine biosynthesis; phosphatidylethanolamine from CDP-diacylglycerol: step 2/2. Functionally, catalyzes the formation of phosphatidylethanolamine (PtdEtn) from phosphatidylserine (PtdSer). The protein is Phosphatidylserine decarboxylase proenzyme of Pseudomonas aeruginosa (strain ATCC 15692 / DSM 22644 / CIP 104116 / JCM 14847 / LMG 12228 / 1C / PRS 101 / PAO1).